We begin with the raw amino-acid sequence, 186 residues long: Peptidoglycan-recognition protein SD (186 aa).

The first 18 residues, 1-18 (MTWIGLLIVGLTAIAVQG), serve as a signal peptide directing secretion. The region spanning 47–169 (AVIAHTAGGA…RQVSATKSPG (123 aa)) is the N-acetylmuramoyl-L-alanine amidase domain. Residues Cys-57 and Cys-63 are joined by a disulfide bond. N-linked (GlcNAc...) asparagine glycosylation occurs at Asn-181.

It belongs to the N-acetylmuramoyl-L-alanine amidase 2 family. In terms of tissue distribution, in larvae, it is mainly expressed in fat body. Also expressed in uninduced hemocytes and mbn-2 cells.

Its subcellular location is the secreted. Peptidoglycan-recognition protein that plays a key role in innate immunity by binding to peptidoglycans (PGN) of Gram-positive bacteria and activating the Toll pathway. Has no activity against on Gram-negative bacteria and fungi. Shows some partial redundancy with PRPGP-SA in Gram-positive bacteria recognition. May act by activating the proteolytic cleavage of Spatzle and the subsequent activation of Toll pathway. Recognizes S.aureus PGN. In Drosophila melanogaster (Fruit fly), this protein is Peptidoglycan-recognition protein SD (PGRP-SD).